We begin with the raw amino-acid sequence, 976 residues long: Receptor-like protein 14 (976 aa).

The N-terminal stretch at 1-26 (MERKVFSGQNLIWVMLLLVQLRGYKC) is a signal peptide. At 27-928 (CIEKERKALL…DDDDEAAIDM (902 aa)) the chain is on the extracellular side. N-linked (GlcNAc...) asparagine glycosylation is found at Asn-60, Asn-75, Asn-98, Asn-112, Asn-151, Asn-185, and Asn-200. 17 LRR repeats span residues 105–127 (FEEL…LFDD), 137–160 (LRNL…FLNA), 162–185 (TSLT…ELKN), 186–209 (LTKL…FTHL), 210–233 (EKLK…ELKV), 234–258 (LTNL…VFCE), 260–283 (KNLR…LGNL), 284–306 (NKLR…SFNS), 308–331 (ESLE…PLAN), 333–358 (TKLK…WLPK), 359–381 (FQLT…LVYQ), 382–405 (TNLR…LLEN), 407–428 (PELK…PTIV), 429–452 (HKLQ…IGHV), 454–477 (PRLL…MGEM), 478–501 (NDIS…LLTG), and 503–528 (FSLI…RLTS). Asn-331 carries N-linked (GlcNAc...) asparagine glycosylation. N-linked (GlcNAc...) asparagine glycosylation occurs at Asn-416. N-linked (GlcNAc...) asparagine glycans are attached at residues Asn-460 and Asn-489. One copy of the LRR 18; degenerate repeat lies at 530-549 (IVLRMHNNLFTGEIGVGLRT). 11 LRR repeats span residues 550–573 (LVNL…SIPP), 575–599 (SSHL…LLAI), 600–623 (HHLN…VVNS), 625–645 (YGIK…VTLL), 646–669 (ENAY…VNTG), 671–692 (MITL…LCDL), 693–715 (TSIR…CLNH), 782–805 (LDYM…ELGD), 806–829 (LSKL…NFSK), 831–854 (KDIE…LTNL), and 856–879 (SLAV…QFNT). Asn-552 carries N-linked (GlcNAc...) asparagine glycosylation. Asn-633 carries N-linked (GlcNAc...) asparagine glycosylation. A glycan (N-linked (GlcNAc...) asparagine) is linked at Asn-680. Residues Asn-813, Asn-826, Asn-853, Asn-861, and Asn-866 are each glycosylated (N-linked (GlcNAc...) asparagine). Positions 897 to 922 (DRSCEGKKNTKEADNGGEEEEEDDDD) are disordered. A compositionally biased stretch (basic and acidic residues) spans 898–910 (RSCEGKKNTKEAD). Residues 911 to 922 (NGGEEEEEDDDD) show a composition bias toward acidic residues. Residues 929–949 (VVLYWTTGSTYAIALIGILVL) traverse the membrane as a helical segment. Residues 950 to 976 (MCFDCPWRRTWLCIVDAFIASGKSMFS) are Cytoplasmic-facing.

The protein belongs to the RLP family.

The protein resides in the cell membrane. The chain is Receptor-like protein 14 from Arabidopsis thaliana (Mouse-ear cress).